Consider the following 351-residue polypeptide: Holliday junction branch migration complex subunit RuvB (351 aa).

The segment at 1–186 is large ATPase domain (RuvB-L); the sequence is MDEKIETRLI…FGIVQRLEFY (186 aa). Residues Ile-25, Arg-26, Gly-67, Lys-70, Thr-71, Thr-72, 133–135, Arg-176, Tyr-186, and Arg-223 contribute to the ATP site; that span reads EDF. Position 71 (Thr-71) interacts with Mg(2+). A small ATPAse domain (RuvB-S) region spans residues 187–257; it reads RIPDLIHIVK…IAKEALDLLN (71 aa). The interval 260–351 is head domain (RuvB-H); that stretch reads IRGLDVMDRK…ENFDLLGKVE (92 aa). The DNA site is built by Arg-296, Arg-315, and Arg-320.

Belongs to the RuvB family. Homohexamer. Forms an RuvA(8)-RuvB(12)-Holliday junction (HJ) complex. HJ DNA is sandwiched between 2 RuvA tetramers; dsDNA enters through RuvA and exits via RuvB. An RuvB hexamer assembles on each DNA strand where it exits the tetramer. Each RuvB hexamer is contacted by two RuvA subunits (via domain III) on 2 adjacent RuvB subunits; this complex drives branch migration. In the full resolvosome a probable DNA-RuvA(4)-RuvB(12)-RuvC(2) complex forms which resolves the HJ.

It localises to the cytoplasm. It carries out the reaction ATP + H2O = ADP + phosphate + H(+). Its function is as follows. The RuvA-RuvB-RuvC complex processes Holliday junction (HJ) DNA during genetic recombination and DNA repair, while the RuvA-RuvB complex plays an important role in the rescue of blocked DNA replication forks via replication fork reversal (RFR). RuvA specifically binds to HJ cruciform DNA, conferring on it an open structure. The RuvB hexamer acts as an ATP-dependent pump, pulling dsDNA into and through the RuvAB complex. RuvB forms 2 homohexamers on either side of HJ DNA bound by 1 or 2 RuvA tetramers; 4 subunits per hexamer contact DNA at a time. Coordinated motions by a converter formed by DNA-disengaged RuvB subunits stimulates ATP hydrolysis and nucleotide exchange. Immobilization of the converter enables RuvB to convert the ATP-contained energy into a lever motion, pulling 2 nucleotides of DNA out of the RuvA tetramer per ATP hydrolyzed, thus driving DNA branch migration. The RuvB motors rotate together with the DNA substrate, which together with the progressing nucleotide cycle form the mechanistic basis for DNA recombination by continuous HJ branch migration. Branch migration allows RuvC to scan DNA until it finds its consensus sequence, where it cleaves and resolves cruciform DNA. The polypeptide is Holliday junction branch migration complex subunit RuvB (Coxiella burnetii (strain RSA 331 / Henzerling II)).